The sequence spans 125 residues: SOSS complex subunit C homolog B (125 aa).

Disordered regions lie at residues 44–73 (PAPQ…RAAF) and 105–125 (PATP…NNPK).

The protein belongs to the SOSS-C family.

The chain is SOSS complex subunit C homolog B from Drosophila willistoni (Fruit fly).